The sequence spans 499 residues: D-alanine--D-alanyl carrier protein ligase (499 aa).

ATP is bound at residue 152–153 (TS). Position 197 (D197) interacts with D-alanine. Residues 292-297 (NTYGPT), D372, 384-387 (YQGR), and K485 contribute to the ATP site. K485 provides a ligand contact to D-alanine.

Belongs to the ATP-dependent AMP-binding enzyme family. DltA subfamily.

It localises to the cytoplasm. The enzyme catalyses holo-[D-alanyl-carrier protein] + D-alanine + ATP = D-alanyl-[D-alanyl-carrier protein] + AMP + diphosphate. The protein operates within cell wall biogenesis; lipoteichoic acid biosynthesis. Functionally, catalyzes the first step in the D-alanylation of lipoteichoic acid (LTA), the activation of D-alanine and its transfer onto the D-alanyl carrier protein (Dcp) DltC. In an ATP-dependent two-step reaction, forms a high energy D-alanyl-AMP intermediate, followed by transfer of the D-alanyl residue as a thiol ester to the phosphopantheinyl prosthetic group of the Dcp. D-alanylation of LTA plays an important role in modulating the properties of the cell wall in Gram-positive bacteria, influencing the net charge of the cell wall. In Lactococcus lactis subsp. lactis (strain IL1403) (Streptococcus lactis), this protein is D-alanine--D-alanyl carrier protein ligase.